Here is a 229-residue protein sequence, read N- to C-terminus: Large ribosomal subunit protein uL1 (229 aa).

Belongs to the universal ribosomal protein uL1 family. In terms of assembly, part of the 50S ribosomal subunit.

In terms of biological role, binds directly to 23S rRNA. The L1 stalk is quite mobile in the ribosome, and is involved in E site tRNA release. Its function is as follows. Protein L1 is also a translational repressor protein, it controls the translation of the L11 operon by binding to its mRNA. The sequence is that of Large ribosomal subunit protein uL1 from Lactococcus lactis subsp. cremoris (strain MG1363).